We begin with the raw amino-acid sequence, 441 residues long: tRNA modification GTPase MnmE (441 aa).

(6S)-5-formyl-5,6,7,8-tetrahydrofolate is bound by residues R21, E79, and K118. Positions 214 to 370 (GFKIAIVGKP…LEGYLKTQDT (157 aa)) constitute a TrmE-type G domain. Residues 224–229 (NVGKSS), 243–249 (SDEAGTT), and 268–271 (DTAG) contribute to the GTP site. Mg(2+) is bound by residues S228 and T249. A (6S)-5-formyl-5,6,7,8-tetrahydrofolate-binding site is contributed by K441.

The protein belongs to the TRAFAC class TrmE-Era-EngA-EngB-Septin-like GTPase superfamily. TrmE GTPase family. Homodimer. Heterotetramer of two MnmE and two MnmG subunits. The cofactor is K(+).

The protein localises to the cytoplasm. Exhibits a very high intrinsic GTPase hydrolysis rate. Involved in the addition of a carboxymethylaminomethyl (cmnm) group at the wobble position (U34) of certain tRNAs, forming tRNA-cmnm(5)s(2)U34. The polypeptide is tRNA modification GTPase MnmE (Campylobacter concisus (strain 13826)).